The chain runs to 492 residues: Bifunctional protein GlmU (492 aa).

The pyrophosphorylase stretch occupies residues 1–241 (MTFRGDTAVL…NALVAGVNNR (241 aa)). UDP-N-acetyl-alpha-D-glucosamine-binding positions include 12–15 (LAAG), lysine 26, glutamine 83, 88–89 (GT), 112–114 (SGD), glycine 151, glutamate 166, asparagine 181, and asparagine 239. Aspartate 114 serves as a coordination point for Mg(2+). Asparagine 239 provides a ligand contact to Mg(2+). Residues 242–262 (VQLAELSAELNRRIVATHQVA) are linker. Residues 263–492 (GVTIIDPATT…KQSQQKSEPD (230 aa)) are N-acetyltransferase. 2 residues coordinate UDP-N-acetyl-alpha-D-glucosamine: arginine 344 and lysine 362. The active-site Proton acceptor is the histidine 374. Residues tyrosine 377 and asparagine 388 each contribute to the UDP-N-acetyl-alpha-D-glucosamine site. Residues alanine 391, 397–398 (NY), serine 416, and alanine 434 contribute to the acetyl-CoA site. Residues 461–492 (VQRKRPGSAAAQAAEKASTRTGKQSQQKSEPD) form a disordered region. The span at 479-492 (TRTGKQSQQKSEPD) shows a compositional bias: polar residues.

This sequence in the N-terminal section; belongs to the N-acetylglucosamine-1-phosphate uridyltransferase family. It in the C-terminal section; belongs to the transferase hexapeptide repeat family. In terms of assembly, homotrimer. The cofactor is Mg(2+).

The protein resides in the cytoplasm. The enzyme catalyses alpha-D-glucosamine 1-phosphate + acetyl-CoA = N-acetyl-alpha-D-glucosamine 1-phosphate + CoA + H(+). It catalyses the reaction N-acetyl-alpha-D-glucosamine 1-phosphate + UTP + H(+) = UDP-N-acetyl-alpha-D-glucosamine + diphosphate. The protein operates within nucleotide-sugar biosynthesis; UDP-N-acetyl-alpha-D-glucosamine biosynthesis; N-acetyl-alpha-D-glucosamine 1-phosphate from alpha-D-glucosamine 6-phosphate (route II): step 2/2. Its pathway is nucleotide-sugar biosynthesis; UDP-N-acetyl-alpha-D-glucosamine biosynthesis; UDP-N-acetyl-alpha-D-glucosamine from N-acetyl-alpha-D-glucosamine 1-phosphate: step 1/1. It functions in the pathway bacterial outer membrane biogenesis; LPS lipid A biosynthesis. Catalyzes the last two sequential reactions in the de novo biosynthetic pathway for UDP-N-acetylglucosamine (UDP-GlcNAc). The C-terminal domain catalyzes the transfer of acetyl group from acetyl coenzyme A to glucosamine-1-phosphate (GlcN-1-P) to produce N-acetylglucosamine-1-phosphate (GlcNAc-1-P), which is converted into UDP-GlcNAc by the transfer of uridine 5-monophosphate (from uridine 5-triphosphate), a reaction catalyzed by the N-terminal domain. This chain is Bifunctional protein GlmU, found in Mycobacterium leprae (strain Br4923).